The following is a 195-amino-acid chain: Imidazoleglycerol-phosphate dehydratase (195 aa).

Belongs to the imidazoleglycerol-phosphate dehydratase family.

The protein localises to the cytoplasm. It carries out the reaction D-erythro-1-(imidazol-4-yl)glycerol 3-phosphate = 3-(imidazol-4-yl)-2-oxopropyl phosphate + H2O. Its pathway is amino-acid biosynthesis; L-histidine biosynthesis; L-histidine from 5-phospho-alpha-D-ribose 1-diphosphate: step 6/9. In Ruegeria pomeroyi (strain ATCC 700808 / DSM 15171 / DSS-3) (Silicibacter pomeroyi), this protein is Imidazoleglycerol-phosphate dehydratase.